Consider the following 409-residue polypeptide: NADH-quinone oxidoreductase subunit D (409 aa).

The protein belongs to the complex I 49 kDa subunit family. NDH-1 is composed of 14 different subunits. Subunits NuoB, C, D, E, F, and G constitute the peripheral sector of the complex.

Its subcellular location is the cell inner membrane. It catalyses the reaction a quinone + NADH + 5 H(+)(in) = a quinol + NAD(+) + 4 H(+)(out). Functionally, NDH-1 shuttles electrons from NADH, via FMN and iron-sulfur (Fe-S) centers, to quinones in the respiratory chain. The immediate electron acceptor for the enzyme in this species is believed to be ubiquinone. Couples the redox reaction to proton translocation (for every two electrons transferred, four hydrogen ions are translocated across the cytoplasmic membrane), and thus conserves the redox energy in a proton gradient. The protein is NADH-quinone oxidoreductase subunit D of Helicobacter pylori (strain HPAG1).